The chain runs to 58 residues: Small ribosomal subunit protein bS21 (58 aa).

The disordered stretch occupies residues 36-58; that stretch reads EHYEKPSVKRKKKSEAARKRKFK. The segment covering 43–58 has biased composition (basic residues); that stretch reads VKRKKKSEAARKRKFK.

Belongs to the bacterial ribosomal protein bS21 family.

This chain is Small ribosomal subunit protein bS21, found in Clostridium kluyveri (strain NBRC 12016).